Reading from the N-terminus, the 505-residue chain is ATP synthase subunit beta, mitochondrial (505 aa).

184–191 provides a ligand contact to ATP; that stretch reads GGAGVGKT.

This sequence belongs to the ATPase alpha/beta chains family. As to quaternary structure, F-type ATPases have 2 components, CF(1) - the catalytic core - and CF(0) - the membrane proton channel. CF(1) has five subunits: alpha(3), beta(3), gamma(1), delta(1), epsilon(1). CF(0) has three main subunits: a, b and c.

The protein localises to the mitochondrion. Its subcellular location is the mitochondrion inner membrane. The catalysed reaction is ATP + H2O + 4 H(+)(in) = ADP + phosphate + 5 H(+)(out). In terms of biological role, mitochondrial membrane ATP synthase (F(1)F(0) ATP synthase or Complex V) produces ATP from ADP in the presence of a proton gradient across the membrane which is generated by electron transport complexes of the respiratory chain. F-type ATPases consist of two structural domains, F(1) - containing the extramembraneous catalytic core, and F(0) - containing the membrane proton channel, linked together by a central stalk and a peripheral stalk. During catalysis, ATP synthesis in the catalytic domain of F(1) is coupled via a rotary mechanism of the central stalk subunits to proton translocation. Subunits alpha and beta form the catalytic core in F(1). Rotation of the central stalk against the surrounding alpha(3)beta(3) subunits leads to hydrolysis of ATP in three separate catalytic sites on the beta subunits. The protein is ATP synthase subunit beta, mitochondrial (ATP2) of Kluyveromyces lactis (strain ATCC 8585 / CBS 2359 / DSM 70799 / NBRC 1267 / NRRL Y-1140 / WM37) (Yeast).